We begin with the raw amino-acid sequence, 440 residues long: Trigger factor (440 aa).

The PPIase FKBP-type domain maps to glycine 162–proline 247.

The protein belongs to the FKBP-type PPIase family. Tig subfamily.

It localises to the cytoplasm. The catalysed reaction is [protein]-peptidylproline (omega=180) = [protein]-peptidylproline (omega=0). Its function is as follows. Involved in protein export. Acts as a chaperone by maintaining the newly synthesized protein in an open conformation. Functions as a peptidyl-prolyl cis-trans isomerase. The sequence is that of Trigger factor from Hamiltonella defensa subsp. Acyrthosiphon pisum (strain 5AT).